Reading from the N-terminus, the 739-residue chain is Probable beta-glucosidase L (739 aa).

The signal sequence occupies residues 1 to 17 (MQTLFLSLLAAAVTVHA). Asn-40 and Asn-224 each carry an N-linked (GlcNAc...) asparagine glycan. Asp-252 is a catalytic residue. N-linked (GlcNAc...) asparagine glycosylation occurs at Asn-398.

Belongs to the glycosyl hydrolase 3 family.

It localises to the secreted. It catalyses the reaction Hydrolysis of terminal, non-reducing beta-D-glucosyl residues with release of beta-D-glucose.. It functions in the pathway glycan metabolism; cellulose degradation. Its function is as follows. Beta-glucosidases are one of a number of cellulolytic enzymes involved in the degradation of cellulosic biomass. Catalyzes the last step releasing glucose from the inhibitory cellobiose. In Aspergillus fumigatus (strain ATCC MYA-4609 / CBS 101355 / FGSC A1100 / Af293) (Neosartorya fumigata), this protein is Probable beta-glucosidase L (bglL).